The primary structure comprises 589 residues: Probable 9-cis-epoxycarotenoid dioxygenase NCED5, chloroplastic (589 aa).

A chloroplast-targeting transit peptide spans 1–45; the sequence is MACSYILTPNPTKLNLSFAPSDLDAPSPSSSVSFTNTKPRRRKLS. Residues 21 to 34 are compositionally biased toward low complexity; that stretch reads SDLDAPSPSSSVSF. A disordered region spans residues 21-51; it reads SDLDAPSPSSSVSFTNTKPRRRKLSANSVSD. 4 residues coordinate Fe cation: H287, H336, H401, and H576.

It belongs to the carotenoid oxygenase family. As to quaternary structure, interacts in vitro with VAR3. Requires Fe(2+) as cofactor. Detected only in seeds.

The protein localises to the plastid. It is found in the chloroplast thylakoid membrane. It carries out the reaction a 9-cis-epoxycarotenoid + O2 = a 12'-apo-carotenal + 2-cis,4-trans-xanthoxin. It catalyses the reaction 9-cis-violaxanthin + O2 = (3S,5R,6S)-5,6-epoxy-3-hydroxy-5,6-dihydro-12'-apo-beta-caroten-12'-al + 2-cis,4-trans-xanthoxin. The catalysed reaction is 9'-cis-neoxanthin + O2 = (3S,5R,6R)-3,5-dihydroxy-6,7-didehydro-5,6-dihydro-12'-apo-beta-caroten-12'-al + 2-cis,4-trans-xanthoxin. Its function is as follows. Has a 11,12(11',12') 9-cis epoxycarotenoid cleavage activity. Catalyzes the first step of abscisic-acid biosynthesis from carotenoids. The chain is Probable 9-cis-epoxycarotenoid dioxygenase NCED5, chloroplastic (NCED5) from Arabidopsis thaliana (Mouse-ear cress).